A 325-amino-acid chain; its full sequence is Histone-lysine N-methyltransferase ATXR4 (325 aa).

The signal sequence occupies residues M1–A30. In terms of domain architecture, SET spans P42–I295.

It belongs to the class V-like SAM-binding methyltransferase superfamily. Histone-lysine methyltransferase family. TRX/MLL subfamily.

It is found in the nucleus. It catalyses the reaction L-lysyl-[histone] + S-adenosyl-L-methionine = N(6)-methyl-L-lysyl-[histone] + S-adenosyl-L-homocysteine + H(+). In terms of biological role, histone methyltransferase. This is Histone-lysine N-methyltransferase ATXR4 (ATXR4) from Arabidopsis thaliana (Mouse-ear cress).